The chain runs to 680 residues: MEDMFSPLIEVENLRREINRHNQLYYVQDNPEISDAQYDTLIRRLKELEEAHPELVTPDSPTQRVGAEPLKAFGIVNHPYPLLSLANAFSDTELEAWYQRVKKLLGNIPFQIDCEPKMDGLAVALTYRNGKFATGATRGDGFQGENITRNLRTIHSIPLNAEPNAPPVFEVRGEVYLSKNGFAKLNRERADKGLPLFANPRNAAAGSLRQLDPSVTAERPLDIFIYALGYSEDSLLPDSHWQILDYFSKIGFRINPLNRLVNTLEEAKEYYRQMAANRASLPYEADGVVFKVDSVSLQHRLGDVGREPRWAIAYKFPAEQVMTRLKKIGISVGRTGTLNPFAVLEPVNVGGVVVKQAALHNEDDILRKDIREGDTVIIQRAGEVIPEVVAPVLSKRNPESKPFRMEESLFNPNLNRTACPVCGGEIYRPAGEAMHYCANVSCPAQFERQLEHFVSRGAMDIRGIGESLSVILAQQGLVKNVSDLYYLTTADLLQLPRMGEKSADNIIDAIADSKTRPLDRVIFGLGVRHVGNETATLLSRHYGNIWALAKTGLGELQTIPDIGDKIASSIVAYFSEEKNVAVIRRLEEAGVRLTSDQKPVNKNMPFSGMEFVVTGKLESFSREEAQEKIRSLGGTAKDNVTKATNYLVVGADAGSKLTKARSMGVKELSEREFINMLEQS.

NAD(+) is bound by residues 35–39, 84–85, and E115; these read DAQYD and SL. Catalysis depends on K117, which acts as the N6-AMP-lysine intermediate. NAD(+) is bound by residues R138, E174, K291, and K315. Zn(2+)-binding residues include C419, C422, C437, and C442. The BRCT domain maps to 601–680; it reads NKNMPFSGME…REFINMLEQS (80 aa).

Belongs to the NAD-dependent DNA ligase family. LigA subfamily. Mg(2+) is required as a cofactor. It depends on Mn(2+) as a cofactor.

It catalyses the reaction NAD(+) + (deoxyribonucleotide)n-3'-hydroxyl + 5'-phospho-(deoxyribonucleotide)m = (deoxyribonucleotide)n+m + AMP + beta-nicotinamide D-nucleotide.. DNA ligase that catalyzes the formation of phosphodiester linkages between 5'-phosphoryl and 3'-hydroxyl groups in double-stranded DNA using NAD as a coenzyme and as the energy source for the reaction. It is essential for DNA replication and repair of damaged DNA. This Dehalococcoides mccartyi (strain ATCC BAA-2100 / JCM 16839 / KCTC 5957 / BAV1) protein is DNA ligase.